Reading from the N-terminus, the 150-residue chain is PTTG1IP family member 2 (150 aa).

The signal sequence occupies residues 1 to 19; that stretch reads MCWLRAWSHILLPVFLSVA. Topologically, residues 20 to 98 are extracellular; sequence LIQLIFNLSD…SIFWANCNVD (79 aa). N-linked (GlcNAc...) asparagine glycosylation occurs at Asn-26. A helical transmembrane segment spans residues 99 to 119; the sequence is LFGIVMLILIVILALAFLWYC. Over 120–150 the chain is Cytoplasmic; that stretch reads LAYYFYMQQHMALYARHGQVPVYNWDAPGDW.

It is found in the membrane. This is PTTG1IP family member 2 from Mus musculus (Mouse).